We begin with the raw amino-acid sequence, 180 residues long: Probable nicotinate-nucleotide adenylyltransferase (180 aa).

Belongs to the NadD family.

It carries out the reaction nicotinate beta-D-ribonucleotide + ATP + H(+) = deamido-NAD(+) + diphosphate. It functions in the pathway cofactor biosynthesis; NAD(+) biosynthesis; deamido-NAD(+) from nicotinate D-ribonucleotide: step 1/1. In terms of biological role, catalyzes the reversible adenylation of nicotinate mononucleotide (NaMN) to nicotinic acid adenine dinucleotide (NaAD). The protein is Probable nicotinate-nucleotide adenylyltransferase of Pelagibacter ubique (strain HTCC1062).